Here is a 192-residue protein sequence, read N- to C-terminus: Adenylate kinase (192 aa).

Residue 12 to 17 (GSGKTT) coordinates ATP. An NMP region spans residues 34 to 63 (STGDLLRAEVASGSELGKTIDSFISKGNLV). Residues Thr-35, Arg-40, 61–63 (NLV), 88–91 (GYPR), and Gln-95 each bind AMP. The tract at residues 130–136 (GRNRGTD) is LID. Position 131 (Arg-131) interacts with ATP. AMP contacts are provided by Arg-133 and Arg-145. Arg-173 serves as a coordination point for ATP.

Belongs to the adenylate kinase family. Monomer.

Its subcellular location is the cytoplasm. It catalyses the reaction AMP + ATP = 2 ADP. The protein operates within purine metabolism; AMP biosynthesis via salvage pathway; AMP from ADP: step 1/1. Its function is as follows. Catalyzes the reversible transfer of the terminal phosphate group between ATP and AMP. Plays an important role in cellular energy homeostasis and in adenine nucleotide metabolism. The chain is Adenylate kinase from Campylobacter jejuni (strain RM1221).